The primary structure comprises 180 residues: Ribosome maturation factor RimM (180 aa).

The region spanning 104–177 (PEEFHDHQLV…RVVVDPPGGL (74 aa)) is the PRC barrel domain.

This sequence belongs to the RimM family. In terms of assembly, binds ribosomal protein uS19.

The protein resides in the cytoplasm. In terms of biological role, an accessory protein needed during the final step in the assembly of 30S ribosomal subunit, possibly for assembly of the head region. Essential for efficient processing of 16S rRNA. May be needed both before and after RbfA during the maturation of 16S rRNA. It has affinity for free ribosomal 30S subunits but not for 70S ribosomes. In Salinispora arenicola (strain CNS-205), this protein is Ribosome maturation factor RimM.